The primary structure comprises 194 residues: Peptidyl-tRNA hydrolase (194 aa).

Y16 is a binding site for tRNA. The active-site Proton acceptor is the H21. F67, N69, and N115 together coordinate tRNA.

Belongs to the PTH family. As to quaternary structure, monomer.

It is found in the cytoplasm. It carries out the reaction an N-acyl-L-alpha-aminoacyl-tRNA + H2O = an N-acyl-L-amino acid + a tRNA + H(+). Functionally, hydrolyzes ribosome-free peptidyl-tRNAs (with 1 or more amino acids incorporated), which drop off the ribosome during protein synthesis, or as a result of ribosome stalling. Catalyzes the release of premature peptidyl moieties from peptidyl-tRNA molecules trapped in stalled 50S ribosomal subunits, and thus maintains levels of free tRNAs and 50S ribosomes. This chain is Peptidyl-tRNA hydrolase, found in Escherichia coli O17:K52:H18 (strain UMN026 / ExPEC).